Consider the following 310-residue polypeptide: ADP-L-glycero-D-manno-heptose-6-epimerase (310 aa).

Residues 10-11, 31-32, Lys-38, Lys-53, 75-79, and Asn-92 each bind NADP(+); these read FI, DN, and EGACS. The active-site Proton acceptor is Tyr-140. Position 144 (Lys-144) interacts with NADP(+). Asn-169 lines the substrate pocket. Residues Val-170 and Lys-178 each coordinate NADP(+). Lys-178 serves as the catalytic Proton acceptor. Substrate contacts are provided by residues Ser-180, His-187, 201-204, Arg-209, and Tyr-272; that span reads FEGS.

Belongs to the NAD(P)-dependent epimerase/dehydratase family. HldD subfamily. As to quaternary structure, homopentamer. NADP(+) serves as cofactor.

The catalysed reaction is ADP-D-glycero-beta-D-manno-heptose = ADP-L-glycero-beta-D-manno-heptose. It participates in nucleotide-sugar biosynthesis; ADP-L-glycero-beta-D-manno-heptose biosynthesis; ADP-L-glycero-beta-D-manno-heptose from D-glycero-beta-D-manno-heptose 7-phosphate: step 4/4. In terms of biological role, catalyzes the interconversion between ADP-D-glycero-beta-D-manno-heptose and ADP-L-glycero-beta-D-manno-heptose via an epimerization at carbon 6 of the heptose. In Citrobacter koseri (strain ATCC BAA-895 / CDC 4225-83 / SGSC4696), this protein is ADP-L-glycero-D-manno-heptose-6-epimerase.